The following is a 698-amino-acid chain: Serine/threonine-protein kinase Nek8 (698 aa).

Positions 4–258 (YERIRVVGRG…LSHIMAQPLC (255 aa)) constitute a Protein kinase domain. Residues 10–18 (VGRGAFGIV) and Lys-33 contribute to the ATP site. Residue Asp-128 is the Proton acceptor of the active site. Thr-162 is subject to Phosphothreonine; by autocatalysis. The interval 278-309 (EKSLTPGPPIASGSTGSRATSARCRGVPRGPV) is disordered. The span at 288–309 (ASGSTGSRATSARCRGVPRGPV) shows a compositional bias: low complexity. RCC1 repeat units follow at residues 416–467 (GIIM…LSTD), 468–519 (GELF…LTSP), 520–585 (GRVL…ITAS), 586–637 (GDCY…VGAE), and 638–690 (GEVY…AVRS).

Belongs to the protein kinase superfamily. NEK Ser/Thr protein kinase family. NIMA subfamily. In terms of assembly, interacts with PKD2; may regulate PKD2 targeting to the cilium. Interacts with ANKS6. Component of a complex containing at least ANKS6, INVS, NEK8 and NPHP3. ANKS6 may organize complex assembly by linking INVS and NPHP3 to NEK8 and INVS may target the complex to the proximal ciliary axoneme. Interacts with ANKS3. Mg(2+) serves as cofactor. As to expression, kidney, liver, and testis.

The protein localises to the cytoplasm. Its subcellular location is the cytoskeleton. It localises to the cell projection. The protein resides in the cilium. It is found in the microtubule organizing center. The protein localises to the centrosome. Its subcellular location is the cilium axoneme. The catalysed reaction is L-seryl-[protein] + ATP = O-phospho-L-seryl-[protein] + ADP + H(+). It carries out the reaction L-threonyl-[protein] + ATP = O-phospho-L-threonyl-[protein] + ADP + H(+). Its function is as follows. Required for renal tubular integrity. May regulate local cytoskeletal structure in kidney tubule epithelial cells. May regulate ciliary biogenesis through targeting of proteins to the cilia. Plays a role in organogenesis and is involved in the regulation of the Hippo signaling pathway. The protein is Serine/threonine-protein kinase Nek8 (Nek8) of Mus musculus (Mouse).